Reading from the N-terminus, the 866-residue chain is FHIP family protein v1g243165 (866 aa).

Disordered stretches follow at residues 739–761 (RDGPPPSLMRAHSIGSIGSASTS) and 781–814 (GSTADISEDASPVSQAPETTGRPRASAVVRESQT). Over residues 751–761 (SIGSIGSASTS) the composition is skewed to low complexity.

The protein belongs to the FHIP family.

The polypeptide is FHIP family protein v1g243165 (Nematostella vectensis (Starlet sea anemone)).